Here is a 217-residue protein sequence, read N- to C-terminus: Large ribosomal subunit protein uL16 (217 aa).

The protein belongs to the universal ribosomal protein uL16 family. In terms of assembly, component of the small ribosomal subunit. Mature ribosomes consist of a small (40S) and a large (60S) subunit. The 40S subunit contains about 33 different proteins and 1 molecule of RNA (18S). The 60S subunit contains about 49 different proteins and 3 molecules of RNA (25S, 5.8S and 5S).

In Dictyostelium discoideum (Social amoeba), this protein is Large ribosomal subunit protein uL16 (rpl10).